A 71-amino-acid polypeptide reads, in one-letter code: SPbeta prophage-derived uncharacterized protein YorP (71 aa).

The protein is SPbeta prophage-derived uncharacterized protein YorP (yorP) of Bacillus subtilis (strain 168).